Consider the following 1697-residue polypeptide: Chromatin-remodeling ATPase INO80 (1697 aa).

Disordered stretches follow at residues 1–324 (MTGA…SDVE), 398–569 (QDEK…LSAY), and 615–637 (ASKQ…QARA). Composition is skewed to polar residues over residues 33–53 (NNEQ…SRSP), 85–94 (QYQAHSSAGN), and 108–122 (LSGN…STPS). Positions 128–143 (GRPDSHPQTSPKKESE) are enriched in basic and acidic residues. A compositionally biased stretch (low complexity) spans 202 to 221 (SSAEATPTPLAPAATAQTSL). Over residues 248–271 (RLEKKPTTEKRRRNPPETEQKTAD) the composition is skewed to basic and acidic residues. The segment covering 272–288 (SRTSNVANGVSEPSKTL) has biased composition (polar residues). Residues 383–466 (ANEASVVAEV…TKRALEGITA (84 aa)) are a coiled coil. 4 stretches are compositionally biased toward basic and acidic residues: residues 414–451 (ENTV…ERAQ), 512–523 (SKEQKQAEKDAA), 540–560 (PKED…RSKE), and 621–635 (KWQE…DTQA). The 126-residue stretch at 581-706 (IWRDIARKDI…SHFIGRKIKG (126 aa)) folds into the DBINO domain. Positions 623–694 (QERTNKSMKD…KLNFLISQTE (72 aa)) form a coiled coil. The 173-residue stretch at 835-1007 (VNLYEQGING…WALLHFIMPT (173 aa)) folds into the Helicase ATP-binding domain. Residue 848–855 (DEMGLGKT) participates in ATP binding. A DEAQ box motif is present at residues 958–961 (DEAQ). The Helicase C-terminal domain occupies 1410 to 1570 (KLDELLRELK…GVDFNTRNRE (161 aa)). Residues 1626 to 1697 (YHEGEGNFDD…IDGDGGLGPS (72 aa)) form a disordered region. The span at 1646–1658 (PVSTAENVGTPSS) shows a compositional bias: polar residues. Basic residues predominate over residues 1663 to 1679 (KRGRGRGSGKGTSKRAK). Over residues 1680 to 1689 (TTKERLRLID) the composition is skewed to basic and acidic residues.

Belongs to the SNF2/RAD54 helicase family. As to quaternary structure, component of the INO80 chromatin-remodeling complex.

The protein localises to the nucleus. The catalysed reaction is ATP + H2O = ADP + phosphate + H(+). ATPase component of the INO80 complex which remodels chromatin by shifting nucleosomes and is involved in DNA repair. This is Chromatin-remodeling ATPase INO80 (ino80) from Aspergillus niger (strain ATCC MYA-4892 / CBS 513.88 / FGSC A1513).